The primary structure comprises 277 residues: 2-dehydro-3-deoxyphosphooctonate aldolase (277 aa).

The protein belongs to the KdsA family.

It is found in the cytoplasm. It catalyses the reaction D-arabinose 5-phosphate + phosphoenolpyruvate + H2O = 3-deoxy-alpha-D-manno-2-octulosonate-8-phosphate + phosphate. It participates in carbohydrate biosynthesis; 3-deoxy-D-manno-octulosonate biosynthesis; 3-deoxy-D-manno-octulosonate from D-ribulose 5-phosphate: step 2/3. It functions in the pathway bacterial outer membrane biogenesis; lipopolysaccharide biosynthesis. The chain is 2-dehydro-3-deoxyphosphooctonate aldolase from Brucella abortus (strain S19).